Consider the following 347-residue polypeptide: DNA-directed RNA polymerase subunit alpha (347 aa).

The interval methionine 1–aspartate 243 is alpha N-terminal domain (alpha-NTD). Residues valine 260 to alanine 347 are alpha C-terminal domain (alpha-CTD).

Belongs to the RNA polymerase alpha chain family. In terms of assembly, homodimer. The RNAP catalytic core consists of 2 alpha, 1 beta, 1 beta' and 1 omega subunit. When a sigma factor is associated with the core the holoenzyme is formed, which can initiate transcription.

It carries out the reaction RNA(n) + a ribonucleoside 5'-triphosphate = RNA(n+1) + diphosphate. In terms of biological role, DNA-dependent RNA polymerase catalyzes the transcription of DNA into RNA using the four ribonucleoside triphosphates as substrates. This Desulfovibrio desulfuricans (strain ATCC 27774 / DSM 6949 / MB) protein is DNA-directed RNA polymerase subunit alpha.